A 129-amino-acid polypeptide reads, in one-letter code: UPF0344 protein USA300HOU_0928 (129 aa).

Transmembrane regions (helical) follow at residues 1-21, 36-56, 67-87, and 99-119; these read MLHL…ATYL, LHMI…WILI, MLLT…EVSI, and MFWI…ILPL.

This sequence belongs to the UPF0344 family.

Its subcellular location is the cell membrane. This Staphylococcus aureus (strain USA300 / TCH1516) protein is UPF0344 protein USA300HOU_0928.